The chain runs to 278 residues: 4-deoxy-L-threo-5-hexosulose-uronate ketol-isomerase (278 aa).

Zn(2+) is bound by residues H196, H198, E203, and H245.

It belongs to the KduI family. The cofactor is Zn(2+).

The enzyme catalyses 5-dehydro-4-deoxy-D-glucuronate = 3-deoxy-D-glycero-2,5-hexodiulosonate. It functions in the pathway glycan metabolism; pectin degradation; 2-dehydro-3-deoxy-D-gluconate from pectin: step 4/5. Functionally, catalyzes the isomerization of 5-dehydro-4-deoxy-D-glucuronate to 3-deoxy-D-glycero-2,5-hexodiulosonate. The chain is 4-deoxy-L-threo-5-hexosulose-uronate ketol-isomerase from Shigella flexneri serotype 5b (strain 8401).